A 192-amino-acid chain; its full sequence is Phosphoheptose isomerase (192 aa).

The SIS domain occupies 36 to 192 (CVDSLAAGGK…DQVEAVAAPA (157 aa)). 51 to 53 (NGG) serves as a coordination point for substrate. 2 residues coordinate Zn(2+): H60 and E64. Residues E64, 93–94 (ND), 119–121 (TTS), S124, and Q171 contribute to the substrate site. Residues Q171 and H179 each contribute to the Zn(2+) site.

Belongs to the SIS family. GmhA subfamily. Homotetramer. It depends on Zn(2+) as a cofactor.

It is found in the cytoplasm. The catalysed reaction is 2 D-sedoheptulose 7-phosphate = D-glycero-alpha-D-manno-heptose 7-phosphate + D-glycero-beta-D-manno-heptose 7-phosphate. The protein operates within carbohydrate biosynthesis; D-glycero-D-manno-heptose 7-phosphate biosynthesis; D-glycero-alpha-D-manno-heptose 7-phosphate and D-glycero-beta-D-manno-heptose 7-phosphate from sedoheptulose 7-phosphate: step 1/1. In terms of biological role, catalyzes the isomerization of sedoheptulose 7-phosphate in D-glycero-D-manno-heptose 7-phosphate. The sequence is that of Phosphoheptose isomerase from Paramagnetospirillum magneticum (strain ATCC 700264 / AMB-1) (Magnetospirillum magneticum).